The primary structure comprises 205 residues: Enhancer of split mgamma protein (205 aa).

In terms of domain architecture, bHLH spans 15–72 (YRKVMKPMLERKRRARINKCLDELKDLMVATLESEGEHVTRLEKADILELTVTHLQKM). The 34-residue stretch at 93–126 (FRSGYIHAVNEVSRSLSQLPGMNVSLGTQLMTHL) folds into the Orange domain. The short motif at 202-205 (WRPW) is the WRPW motif element.

As to quaternary structure, homodimer. Heterodimer with dpn. Might form higher-order oligomers. Transcription repression requires formation of a complex with a corepressor protein (Groucho). In terms of tissue distribution, expressed in sensory organ precursors in the wing, leg and eye imaginal disk.

It is found in the nucleus. Functionally, transcriptional repressor of genes that require a bHLH protein for their transcription. May serve as a transcriptional regulator of the Achaete-scute complex (AS-C) genes. Contributes to the neural-epidermal lineage decision during early neurogenesis. Part of the Notch signaling pathway, plays a role in neuroblasts proliferation in embryos and larvae. In the larval brain, together with other self-renewal transcriptional repressors such as klu and dpn, required for type II neuroblast self-renewal and for maintaining erm in an inactive state in intermediate neural progenitors (INP) derived from type II neuroblasts. The polypeptide is Enhancer of split mgamma protein (Drosophila melanogaster (Fruit fly)).